Reading from the N-terminus, the 858-residue chain is Leucine--tRNA ligase (858 aa).

Residues 42–52 (PYPSGRLHMGH) carry the 'HIGH' region motif. Residues 618 to 622 (KMSKS) carry the 'KMSKS' region motif. Residue Lys-621 participates in ATP binding.

Belongs to the class-I aminoacyl-tRNA synthetase family.

It is found in the cytoplasm. The catalysed reaction is tRNA(Leu) + L-leucine + ATP = L-leucyl-tRNA(Leu) + AMP + diphosphate. This is Leucine--tRNA ligase from Vibrio cholerae serotype O1 (strain ATCC 39315 / El Tor Inaba N16961).